The primary structure comprises 528 residues: Bifunctional purine biosynthesis protein PurH (528 aa).

Residues 2–149 (TDLAPLRRAL…KNHGFVSVVV (148 aa)) form the MGS-like domain.

This sequence belongs to the PurH family.

It catalyses the reaction (6R)-10-formyltetrahydrofolate + 5-amino-1-(5-phospho-beta-D-ribosyl)imidazole-4-carboxamide = 5-formamido-1-(5-phospho-D-ribosyl)imidazole-4-carboxamide + (6S)-5,6,7,8-tetrahydrofolate. The catalysed reaction is IMP + H2O = 5-formamido-1-(5-phospho-D-ribosyl)imidazole-4-carboxamide. It participates in purine metabolism; IMP biosynthesis via de novo pathway; 5-formamido-1-(5-phospho-D-ribosyl)imidazole-4-carboxamide from 5-amino-1-(5-phospho-D-ribosyl)imidazole-4-carboxamide (10-formyl THF route): step 1/1. It functions in the pathway purine metabolism; IMP biosynthesis via de novo pathway; IMP from 5-formamido-1-(5-phospho-D-ribosyl)imidazole-4-carboxamide: step 1/1. This is Bifunctional purine biosynthesis protein PurH from Roseobacter denitrificans (strain ATCC 33942 / OCh 114) (Erythrobacter sp. (strain OCh 114)).